A 203-amino-acid chain; its full sequence is uncharacterized protein (203 aa).

Residues 180-200 (VYLLLFGIPLLILIFLIIFFI) form a helical membrane-spanning segment.

The protein resides in the virion. The protein localises to the host membrane. This is an uncharacterized protein from Acanthamoeba polyphaga (Amoeba).